The primary structure comprises 268 residues: Acyl-CoA-binding domain-containing protein 4 (268 aa).

The ACB domain maps to 12–101 (CQKQFQAAVS…MKLVAQKVID (90 aa)). Residues 23–32 (IQNLPKNGSY), 43–47 (YSYYK), lysine 69, and tyrosine 88 contribute to the an acyl-CoA site. The tract at residues 151-175 (AVSEPPCLPKEPAPPSPESHSPRDL) is disordered. The segment covering 156–167 (PCLPKEPAPPSP) has biased composition (pro residues). A phosphoserine mark is found at serine 166 and serine 171.

Binds medium- and long-chain acyl-CoA esters and may function as an intracellular carrier of acyl-CoA esters. This is Acyl-CoA-binding domain-containing protein 4 (ACBD4) from Homo sapiens (Human).